The primary structure comprises 207 residues: Ras-related protein Rab-7a (207 aa).

N-acetylthreonine is present on threonine 2. Positions 17, 18, 19, 20, 21, 22, 23, 34, 35, 37, and 40 each coordinate GTP. Threonine 22 lines the Mg(2+) pocket. The Switch 1 signature appears at 28-41; sequence YVNKKFSNQYKATI. Positions 40 and 63 each coordinate Mg(2+). Glycine 66 serves as a coordination point for GTP. A Switch 2 motif is present at residues 67 to 82; it reads QERFQSLGVAFYRGAD. Residue serine 72 is modified to Phosphoserine. Asparagine 125, lysine 126, aspartate 128, alanine 156, and lysine 157 together coordinate GTP. Glycyl lysine isopeptide (Lys-Gly) (interchain with G-Cter in ubiquitin) cross-links involve residues lysine 191 and lysine 194. S-geranylgeranyl cysteine attachment occurs at residues cysteine 205 and cysteine 207. Cysteine methyl ester is present on cysteine 207.

Belongs to the small GTPase superfamily. Rab family. As to quaternary structure, interacts with NTRK1/TRKA. Interacts with RILP. Interacts with PSMA7. Interacts with RNF115. Interacts with FYCO1. Interacts with the PIK3C3/VPS34-PIK3R4 complex. The GTP-bound form interacts with OSBPL1A. The GTP-bound form interacts with RAC1. Interacts with CLN3. Interacts with CHM, the substrate-binding subunit of the Rab geranylgeranyltransferase complex. Interacts with C9orf72. Does not interact with HPS4 and the BLOC-3 complex (heterodimer of HPS1 and HPS4). Interacts with CLN5. Interacts with PLEKHM1 (via N- and C-terminus). Interacts with PRPH; the interaction is direct. Interacts with VPS13A. The GDP-bound form interacts with RIMOC1. Interacts with the MON1A-CCZ1B complex and this interaction is enhanced in the presence of RIMOC1. Interacts with VPS39 and VPS41. Forms a ternary complex with LAMP2 and RUFY4; the interaction with LAMP2 is mediated by RUFY4 (via RUN and coiled coil domains). Requires Mg(2+) as cofactor. In terms of processing, deubiquitination at Lys-191 and Lys-194 by USP32. Phosphorylated at Ser-72 by LRRK1; phosphorylation is dependent on protein kinase C (PKC) activation of LRRK1. Post-translationally, prenylated. Prenylation is required for association with cellular membranes.

The protein resides in the cytoplasmic vesicle. It is found in the phagosome membrane. It localises to the late endosome membrane. The protein localises to the lysosome membrane. Its subcellular location is the melanosome membrane. The protein resides in the autophagosome membrane. It is found in the lipid droplet. It localises to the endosome membrane. The protein localises to the mitochondrion membrane. It carries out the reaction GTP + H2O = GDP + phosphate + H(+). With respect to regulation, regulated by guanine nucleotide exchange factors (GEFs) which promote the exchange of bound GDP for free GTP. Regulated by GTPase activating proteins (GAPs) which increase the GTP hydrolysis activity. Inhibited by GDP dissociation inhibitors (GDIs). Functionally, the small GTPases Rab are key regulators of intracellular membrane trafficking, from the formation of transport vesicles to their fusion with membranes. Rabs cycle between an inactive GDP-bound form and an active GTP-bound form that is able to recruit to membranes different sets of downstream effectors directly responsible for vesicle formation, movement, tethering and fusion. In its active state, RAB7A binds to a variety of effector proteins playing a key role in the regulation of endo-lysosomal trafficking. Governs early-to-late endosomal maturation, microtubule minus-end as well as plus-end directed endosomal migration and positioning, and endosome-lysosome transport through different protein-protein interaction cascades. Also plays a central role in growth-factor-mediated cell signaling, nutrient-transporter-mediated nutrient uptake, neurotrophin transport in the axons of neurons and lipid metabolism. Also involved in regulation of some specialized endosomal membrane trafficking, such as maturation of melanosomes, pathogen-induced phagosomes (or vacuoles) and autophagosomes. Plays a role in the maturation and acidification of phagosomes that engulf pathogens, such as S.aureus and Mycobacteria. Plays a role in the fusion of phagosomes with lysosomes. In concert with RAC1, plays a role in regulating the formation of RBs (ruffled borders) in osteoclasts. Controls the endosomal trafficking and neurite outgrowth signaling of NTRK1/TRKA. Regulates the endocytic trafficking of the EGF-EGFR complex by regulating its lysosomal degradation. Involved in the ADRB2-stimulated lipolysis through lipophagy, a cytosolic lipase-independent autophagic pathway. Required for the exosomal release of SDCBP, CD63 and syndecan. Required for vesicular trafficking and cell surface expression of ACE2. May play a role in PRPH neuronal intermediate filament assembly. The polypeptide is Ras-related protein Rab-7a (RAB7A) (Pongo abelii (Sumatran orangutan)).